The primary structure comprises 140 residues: Nucleoside diphosphate kinase (140 aa).

ATP-binding residues include K11, F59, R87, T93, R104, and N114. The active-site Pros-phosphohistidine intermediate is H117.

It belongs to the NDK family. In terms of assembly, homotetramer. Mg(2+) is required as a cofactor.

It is found in the cytoplasm. The catalysed reaction is a 2'-deoxyribonucleoside 5'-diphosphate + ATP = a 2'-deoxyribonucleoside 5'-triphosphate + ADP. It carries out the reaction a ribonucleoside 5'-diphosphate + ATP = a ribonucleoside 5'-triphosphate + ADP. Functionally, major role in the synthesis of nucleoside triphosphates other than ATP. The ATP gamma phosphate is transferred to the NDP beta phosphate via a ping-pong mechanism, using a phosphorylated active-site intermediate. This is Nucleoside diphosphate kinase from Paracoccus denitrificans (strain Pd 1222).